The sequence spans 433 residues: Keratin, type I cytoskeletal 17 (433 aa).

A disordered region spans residues 1-24 (MTTTIRQFTSSSSIKGSSGLGGGS). The head stretch occupies residues 1–83 (MTTTIRQFTS…GGVDGLLAGG (83 aa)). Phosphoserine is present on residues S12 and S13. A Glycyl lysine isopeptide (Lys-Gly) (interchain with G-Cter in SUMO1); alternate cross-link involves residue K15. Residue K15 forms a Glycyl lysine isopeptide (Lys-Gly) (interchain with G-Cter in SUMO2); alternate linkage. Phosphoserine occurs at positions 25, 32, 34, and 39. S44 is subject to Phosphoserine; by RPS6KA1. The coil 1A stretch occupies residues 84 to 120 (EKATMQNLNDRLASYLDKVRALEEANTELEVKIRDWY). Residues 84-395 (EKATMQNLND…RLLEGEDAHL (312 aa)) form the IF rod domain. Residue T110 is modified to Phosphothreonine. The segment at 121 to 138 (QKQAPGPARDYSAYYHTI) is linker 1. Residues 139–230 (EDLKNKILVA…NHEEEMNALR (92 aa)) form a coil 1B region. A linker 12 region spans residues 231-250 (GQVGGEINVEMDAAPGVDLS). Residues 251 to 392 (RILSEMRDQY…TYRRLLEGED (142 aa)) are coil 2. K278 participates in a covalent cross-link: Glycyl lysine isopeptide (Lys-Gly) (interchain with G-Cter in SUMO2). T279 is subject to Phosphothreonine. Residue S323 is modified to Phosphoserine. The interval 393–433 (AHLTQYKPKEPVTTRQVRTIVEEVQDGKVISSREQVHQTTR) is tail. Glycyl lysine isopeptide (Lys-Gly) (interchain with G-Cter in SUMO1); alternate cross-links involve residues K399, K401, and K420. Residues K399, K401, and K420 each participate in a glycyl lysine isopeptide (Lys-Gly) (interchain with G-Cter in SUMO2); alternate cross-link.

Belongs to the intermediate filament family. As to quaternary structure, heterodimer of a type I and a type II keratin. KRT17 associates with KRT6 isomers (KRT6A or KRT6B). Interacts with TRADD and SFN. In terms of processing, phosphorylation at Ser-44 occurs in a growth- and stress-dependent fashion in skin keratinocytes, it has no effect on filament organization. As to expression, expressed strongly in outer root sheath and medulla region of hair follicle and in the early differentiating epithelial cells (trichocytes) within the hair bulb region. Weak expression in the matrix cells of hair bulb. Also present in the sweat gland within the skin, vibrissae follicle, salivary gland, tooth and thymus.

Its subcellular location is the cytoplasm. In terms of biological role, type I keratin involved in the formation and maintenance of various skin appendages, specifically in determining shape and orientation of hair. Required for the correct growth of hair follicles, in particular for the persistence of the anagen (growth) state. Modulates the function of TNF-alpha in the specific context of hair cycling. Regulates protein synthesis and epithelial cell growth through binding to the adapter protein SFN and by stimulating Akt/mTOR pathway. Involved in tissue repair. May be a marker of basal cell differentiation in complex epithelia and therefore indicative of a certain type of epithelial 'stem cells'. Acts as a promoter of epithelial proliferation by acting a regulator of immune response in skin: promotes Th1/Th17-dominated immune environment contributing to the development of basaloid skin tumors. May act as an autoantigen in the immunopathogenesis of psoriasis, with certain peptide regions being a major target for autoreactive T-cells and hence causing their proliferation. In Mus musculus (Mouse), this protein is Keratin, type I cytoskeletal 17 (Krt17).